The chain runs to 447 residues: N-succinylarginine dihydrolase (447 aa).

Substrate is bound by residues 19–28, Asn-110, and 137–138; these read AGLSFGNEAS and HR. The active site involves Glu-174. Arg-212 provides a ligand contact to substrate. Residue His-248 is part of the active site. Substrate contacts are provided by Asp-250 and Asn-359. The Nucleophile role is filled by Cys-365.

It belongs to the succinylarginine dihydrolase family. Homodimer.

The enzyme catalyses N(2)-succinyl-L-arginine + 2 H2O + 2 H(+) = N(2)-succinyl-L-ornithine + 2 NH4(+) + CO2. It participates in amino-acid degradation; L-arginine degradation via AST pathway; L-glutamate and succinate from L-arginine: step 2/5. Catalyzes the hydrolysis of N(2)-succinylarginine into N(2)-succinylornithine, ammonia and CO(2). This Salmonella paratyphi B (strain ATCC BAA-1250 / SPB7) protein is N-succinylarginine dihydrolase.